We begin with the raw amino-acid sequence, 391 residues long: Arginine biosynthesis bifunctional protein ArgJ (391 aa).

6 residues coordinate substrate: Thr149, Lys172, Thr183, Glu263, Asn386, and Ser391. Catalysis depends on Thr183, which acts as the Nucleophile.

Belongs to the ArgJ family. Heterotetramer of two alpha and two beta chains.

It is found in the cytoplasm. It carries out the reaction N(2)-acetyl-L-ornithine + L-glutamate = N-acetyl-L-glutamate + L-ornithine. The catalysed reaction is L-glutamate + acetyl-CoA = N-acetyl-L-glutamate + CoA + H(+). The protein operates within amino-acid biosynthesis; L-arginine biosynthesis; L-ornithine and N-acetyl-L-glutamate from L-glutamate and N(2)-acetyl-L-ornithine (cyclic): step 1/1. It functions in the pathway amino-acid biosynthesis; L-arginine biosynthesis; N(2)-acetyl-L-ornithine from L-glutamate: step 1/4. Catalyzes two activities which are involved in the cyclic version of arginine biosynthesis: the synthesis of N-acetylglutamate from glutamate and acetyl-CoA as the acetyl donor, and of ornithine by transacetylation between N(2)-acetylornithine and glutamate. In Bifidobacterium longum (strain NCC 2705), this protein is Arginine biosynthesis bifunctional protein ArgJ.